Consider the following 131-residue polypeptide: M-zodatoxin-Lt8o (131 aa).

The signal sequence occupies residues M1–S20. The propeptide occupies K21–R60.

It belongs to the cationic peptide 06 (cytoinsectotoxin) family. Expressed by the venom gland.

The protein localises to the secreted. In terms of biological role, insecticidal, cytolytic and antimicrobial peptide. Forms voltage-dependent, ion-permeable channels in membranes. At high concentration causes cell membrane lysis. This chain is M-zodatoxin-Lt8o (cit 1-14), found in Lachesana tarabaevi (Spider).